Consider the following 268-residue polypeptide: Thiazole synthase (268 aa).

Residue lysine 108 is the Schiff-base intermediate with DXP of the active site. 1-deoxy-D-xylulose 5-phosphate is bound by residues glycine 169, 195-196, and 217-218; these read AG and NS. The interval 248 to 268 is disordered; sequence RLKENPLASPSSPLEGVISNN. Residues 255–268 show a composition bias toward polar residues; it reads ASPSSPLEGVISNN.

It belongs to the ThiG family. In terms of assembly, homotetramer. Forms heterodimers with either ThiH or ThiS.

Its subcellular location is the cytoplasm. It carries out the reaction [ThiS sulfur-carrier protein]-C-terminal-Gly-aminoethanethioate + 2-iminoacetate + 1-deoxy-D-xylulose 5-phosphate = [ThiS sulfur-carrier protein]-C-terminal Gly-Gly + 2-[(2R,5Z)-2-carboxy-4-methylthiazol-5(2H)-ylidene]ethyl phosphate + 2 H2O + H(+). Its pathway is cofactor biosynthesis; thiamine diphosphate biosynthesis. In terms of biological role, catalyzes the rearrangement of 1-deoxy-D-xylulose 5-phosphate (DXP) to produce the thiazole phosphate moiety of thiamine. Sulfur is provided by the thiocarboxylate moiety of the carrier protein ThiS. In vitro, sulfur can be provided by H(2)S. The sequence is that of Thiazole synthase from Prochlorococcus marinus (strain NATL1A).